Reading from the N-terminus, the 35-residue chain is Photosystem II reaction center protein Psb30 (35 aa).

Residues 7 to 27 traverse the membrane as a helical segment; the sequence is LIANFGALALITLAGPAVIFI.

This sequence belongs to the Psb30/Ycf12 family. As to quaternary structure, PSII is composed of 1 copy each of membrane proteins PsbA, PsbB, PsbC, PsbD, PsbE, PsbF, PsbH, PsbI, PsbJ, PsbK, PsbL, PsbM, PsbT, PsbX, PsbY, PsbZ, Psb30/Ycf12, peripheral proteins PsbO, CyanoQ (PsbQ), PsbU, PsbV and a large number of cofactors. It forms dimeric complexes.

It localises to the cellular thylakoid membrane. A core subunit of photosystem II (PSII), probably helps stabilize the reaction center. The sequence is that of Photosystem II reaction center protein Psb30 from Synechococcus sp. (strain CC9311).